An 81-amino-acid polypeptide reads, in one-letter code: Carboxysome shell vertex protein CsoS4B (81 aa).

One can recognise a BMV domain in the interval 1–77; sequence MEVMRVRSDL…TDLTIGGIID (77 aa).

This sequence belongs to the CcmL/EutN family. CsoS4 subfamily. Homopentamer.

The protein localises to the carboxysome. Its function is as follows. Probably forms vertices in the carboxysome. Has been modeled to induce curvature upon insertion into an otherwise flat hexagonal layer of major carboxysome subunits. A minor shell protein, only 12 pentamers of CsoS4A/CsoS4B are calculated to be present in each carboxysome. The 2 CsoS4 proteins contribute to the impermeability of the carboxysome to CO(2). Its central pore is probably too small to allow passage of metabolites; its function might be to anchor different proteins or metabolites to the carboxysome. Unlike beta-carboxysomes, alpha-carboxysomes (Cb) can form without cargo protein. CsoS2 is essential for Cb formation and is also capable of targeting foreign proteins to the Cb. The Cb shell assembles with the aid of CsoS2; CsoS1A, CsoS1B and CsoS1C form the majority of the shell while CsoS4A and CsoS4B form vertices. CsoS1D forms pseudohexamers that probably control metabolite flux into and out of the shell. The protein is Carboxysome shell vertex protein CsoS4B of Halothiobacillus neapolitanus (strain ATCC 23641 / c2) (Thiobacillus neapolitanus).